The chain runs to 427 residues: Histidine--tRNA ligase (427 aa).

Belongs to the class-II aminoacyl-tRNA synthetase family. Homodimer.

The protein localises to the cytoplasm. The catalysed reaction is tRNA(His) + L-histidine + ATP = L-histidyl-tRNA(His) + AMP + diphosphate + H(+). This Proteus mirabilis (strain HI4320) protein is Histidine--tRNA ligase.